The chain runs to 351 residues: Adenine deaminase (351 aa).

The Zn(2+) site is built by histidine 20, histidine 22, and histidine 200. The Proton donor role is filled by glutamate 203. Zn(2+) is bound at residue aspartate 281. A substrate-binding site is contributed by aspartate 282.

The protein belongs to the metallo-dependent hydrolases superfamily. Adenosine and AMP deaminases family. Adenine deaminase type 2 subfamily. Requires Zn(2+) as cofactor.

It catalyses the reaction adenine + H2O + H(+) = hypoxanthine + NH4(+). Catalyzes the hydrolytic deamination of adenine to hypoxanthine. Plays an important role in the purine salvage pathway and in nitrogen catabolism. The sequence is that of Adenine deaminase from Cupriavidus taiwanensis (strain DSM 17343 / BCRC 17206 / CCUG 44338 / CIP 107171 / LMG 19424 / R1) (Ralstonia taiwanensis (strain LMG 19424)).